We begin with the raw amino-acid sequence, 235 residues long: Endonuclease V (235 aa).

Mg(2+) is bound by residues aspartate 45 and aspartate 115.

This sequence belongs to the endonuclease V family. Mg(2+) serves as cofactor.

It localises to the cytoplasm. It carries out the reaction Endonucleolytic cleavage at apurinic or apyrimidinic sites to products with a 5'-phosphate.. Its function is as follows. DNA repair enzyme involved in the repair of deaminated bases. Selectively cleaves double-stranded DNA at the second phosphodiester bond 3' to a deoxyinosine leaving behind the intact lesion on the nicked DNA. This Bacillus thuringiensis subsp. konkukian (strain 97-27) protein is Endonuclease V.